Consider the following 342-residue polypeptide: Ribosomal RNA small subunit methyltransferase C (342 aa).

Belongs to the methyltransferase superfamily. RsmC family. Monomer.

Its subcellular location is the cytoplasm. The catalysed reaction is guanosine(1207) in 16S rRNA + S-adenosyl-L-methionine = N(2)-methylguanosine(1207) in 16S rRNA + S-adenosyl-L-homocysteine + H(+). In terms of biological role, specifically methylates the guanine in position 1207 of 16S rRNA in the 30S particle. The polypeptide is Ribosomal RNA small subunit methyltransferase C (Salmonella gallinarum (strain 287/91 / NCTC 13346)).